A 447-amino-acid chain; its full sequence is Putative branched-chain amino acid carrier protein SAR1419 (447 aa).

12 helical membrane passes run 6 to 26 (WVIGFTLFAMFFGAGNLIFPP), 40 to 60 (ILAFVLTGIGLPLLGVIVGAL), 74 to 94 (PKFSILFLIIIYLTIGPLFAI), 114 to 134 (SSIALFIFTIIYFIVVLYICL), 143 to 163 (IGSLLTPLLLITILAMIIKAY), 193 to 213 (GYLTMDAIAAIAFSMIVVNAV), 229 to 249 (LTAGLIAAIALIFIYISLGYI), 290 to 310 (LLGIIVALACLTTACGLIVAV), 326 to 346 (FVLVFILMSFIIANQGLNAVI), 350 to 370 (IPVLSIVYPVAITVVLLILIA), 382 to 402 (IPVIIVFILSIFSVISKLGWL), and 417 to 437 (LEWFPVAIIATILGYLVGIFV).

Belongs to the branched chain amino acid transporter family.

The protein resides in the cell membrane. Its function is as follows. Component of the transport system for branched-chain amino acids (leucine, isoleucine and valine), which is coupled to a proton motive force (Potential). Contributes to NaCl tolerance. The chain is Putative branched-chain amino acid carrier protein SAR1419 from Staphylococcus aureus (strain MRSA252).